A 157-amino-acid polypeptide reads, in one-letter code: 3-dehydroquinate dehydratase (157 aa).

Catalysis depends on tyrosine 24, which acts as the Proton acceptor. Residues asparagine 75, histidine 81, and aspartate 88 each coordinate substrate. Residue histidine 101 is the Proton donor of the active site. Residues 102–103 and arginine 112 contribute to the substrate site; that span reads LS.

Belongs to the type-II 3-dehydroquinase family. In terms of assembly, homododecamer.

The catalysed reaction is 3-dehydroquinate = 3-dehydroshikimate + H2O. It functions in the pathway metabolic intermediate biosynthesis; chorismate biosynthesis; chorismate from D-erythrose 4-phosphate and phosphoenolpyruvate: step 3/7. Catalyzes a trans-dehydration via an enolate intermediate. This Brucella melitensis biotype 1 (strain ATCC 23456 / CCUG 17765 / NCTC 10094 / 16M) protein is 3-dehydroquinate dehydratase.